We begin with the raw amino-acid sequence, 479 residues long: Ribosomal RNA small subunit methyltransferase F (479 aa).

S-adenosyl-L-methionine is bound by residues A125–K131, E149, D176, and D194. The active-site Nucleophile is the C247.

The protein belongs to the class I-like SAM-binding methyltransferase superfamily. RsmB/NOP family.

Its subcellular location is the cytoplasm. The catalysed reaction is cytidine(1407) in 16S rRNA + S-adenosyl-L-methionine = 5-methylcytidine(1407) in 16S rRNA + S-adenosyl-L-homocysteine + H(+). Its function is as follows. Specifically methylates the cytosine at position 1407 (m5C1407) of 16S rRNA. In Escherichia coli (strain SMS-3-5 / SECEC), this protein is Ribosomal RNA small subunit methyltransferase F.